A 1135-amino-acid chain; its full sequence is Eukaryotic translation initiation factor 3 subunit A (1135 aa).

A PCI domain is found at 319-501; it reads LQRMAAHVLL…NSIYFGTDLT (183 aa). Composition is skewed to basic and acidic residues over residues 588 to 623 and 829 to 899; these read QNNA…EERE and AAEE…RGGD. Disordered regions lie at residues 588-631 and 829-1135; these read QNNA…QNEI and AAEE…VKRR. S908 carries the phosphoserine modification. Basic and acidic residues-rich tracts occupy residues 920–971, 985–1045, 1053–1081, and 1104–1125; these read ERNE…EPDS, SRDD…EPQR, DAPR…RGDQ, and AREE…KAAD.

This sequence belongs to the eIF-3 subunit A family. As to quaternary structure, component of the eukaryotic translation initiation factor 3 (eIF-3) complex. The eIF-3 complex interacts with pix.

Its subcellular location is the cytoplasm. In terms of biological role, RNA-binding component of the eukaryotic translation initiation factor 3 (eIF-3) complex, which is involved in protein synthesis of a specialized repertoire of mRNAs and, together with other initiation factors, stimulates binding of mRNA and methionyl-tRNAi to the 40S ribosome. The eIF-3 complex specifically targets and initiates translation of a subset of mRNAs involved in cell proliferation. This chain is Eukaryotic translation initiation factor 3 subunit A, found in Drosophila erecta (Fruit fly).